The sequence spans 361 residues: Phenylalanine--tRNA ligase alpha subunit (361 aa).

Residue Glu260 coordinates Mg(2+).

The protein belongs to the class-II aminoacyl-tRNA synthetase family. Phe-tRNA synthetase alpha subunit type 1 subfamily. As to quaternary structure, tetramer of two alpha and two beta subunits. Mg(2+) serves as cofactor.

It is found in the cytoplasm. It carries out the reaction tRNA(Phe) + L-phenylalanine + ATP = L-phenylalanyl-tRNA(Phe) + AMP + diphosphate + H(+). The chain is Phenylalanine--tRNA ligase alpha subunit from Bartonella quintana (strain Toulouse) (Rochalimaea quintana).